Here is a 140-residue protein sequence, read N- to C-terminus: Putative pre-16S rRNA nuclease (140 aa).

It belongs to the YqgF nuclease family.

The protein localises to the cytoplasm. In terms of biological role, could be a nuclease involved in processing of the 5'-end of pre-16S rRNA. The sequence is that of Putative pre-16S rRNA nuclease from Chlorobium chlorochromatii (strain CaD3).